The primary structure comprises 155 residues: Ribonuclease H (155 aa).

The RNase H type-1 domain occupies 1–142; it reads MLKQVEIFTD…CDELARNAAG (142 aa). 4 residues coordinate Mg(2+): D10, E48, D70, and D134.

Belongs to the RNase H family. As to quaternary structure, monomer. Mg(2+) is required as a cofactor.

The protein localises to the cytoplasm. The catalysed reaction is Endonucleolytic cleavage to 5'-phosphomonoester.. Its function is as follows. Endonuclease that specifically degrades the RNA of RNA-DNA hybrids. The protein is Ribonuclease H of Erwinia tasmaniensis (strain DSM 17950 / CFBP 7177 / CIP 109463 / NCPPB 4357 / Et1/99).